The following is a 166-amino-acid chain: Lipoprotein signal peptidase (166 aa).

The next 4 helical transmembrane spans lie at 9–29 (ASGA…FDQL), 45–65 (ALTS…FGFL), 71–91 (WQRW…CFLL), and 100–120 (FSVS…DRLV). Residues D126 and D144 contribute to the active site. A helical transmembrane segment spans residues 135–155 (WHFPAFNLADSAITIGAVLLI).

This sequence belongs to the peptidase A8 family.

It is found in the cell inner membrane. It carries out the reaction Release of signal peptides from bacterial membrane prolipoproteins. Hydrolyzes -Xaa-Yaa-Zaa-|-(S,diacylglyceryl)Cys-, in which Xaa is hydrophobic (preferably Leu), and Yaa (Ala or Ser) and Zaa (Gly or Ala) have small, neutral side chains.. The protein operates within protein modification; lipoprotein biosynthesis (signal peptide cleavage). This protein specifically catalyzes the removal of signal peptides from prolipoproteins. This is Lipoprotein signal peptidase from Burkholderia cenocepacia (strain ATCC BAA-245 / DSM 16553 / LMG 16656 / NCTC 13227 / J2315 / CF5610) (Burkholderia cepacia (strain J2315)).